The following is a 272-amino-acid chain: Undecaprenyl-diphosphatase (272 aa).

7 helical membrane-spanning segments follow: residues 2–22, 43–63, 82–102, 110–130, 185–205, 224–244, and 252–272; these read FDII…FLPI, FISM…VLLY, WQLW…GLPL, LHTP…FIIL, YVAT…VLII, VLMT…KWLL, and FKPF…VMFI.

The protein belongs to the UppP family.

It localises to the cell membrane. The enzyme catalyses di-trans,octa-cis-undecaprenyl diphosphate + H2O = di-trans,octa-cis-undecaprenyl phosphate + phosphate + H(+). Catalyzes the dephosphorylation of undecaprenyl diphosphate (UPP). Confers resistance to bacitracin. The sequence is that of Undecaprenyl-diphosphatase from Lacticaseibacillus casei (strain BL23) (Lactobacillus casei).